A 316-amino-acid chain; its full sequence is Bifunctional peptidase and (3S)-lysyl hydroxylase JMJD7 (316 aa).

C19 carries the cysteine sulfenic acid (-SOH) modification. Positions 123 and 172 each coordinate 2-oxoglutarate. Y123 is a succinate binding site. Residues 124 to 310 (IQKQNSNLSV…YCYYRMLEQM (187 aa)) enclose the JmjC domain. H175 and D177 together coordinate Fe cation. 3 residues coordinate 2-oxoglutarate: N181, Y183, and K190. Residues Y183 and K190 each coordinate succinate. H278 contributes to the Fe cation binding site. W292 contacts 2-oxoglutarate.

As to quaternary structure, homodimer; disulfide-linked. Requires Fe(2+) as cofactor. As to expression, expressed in the pars intercerebralis and fan-shaped body, regions known to be involved in sleep.

Its subcellular location is the nucleus. It is found in the cytoplasm. The enzyme catalyses L-lysyl-[protein] + 2-oxoglutarate + O2 = (3S)-3-hydroxy-L-lysyl-[protein] + succinate + CO2. Bifunctional enzyme that acts both as an endopeptidase and 2-oxoglutarate-dependent monooxygenase. Endopeptidase that cleaves histones N-terminal tails at the carboxyl side of methylated arginine or lysine residues, to generate 'tailless nucleosomes', which may trigger transcription elongation. Hydroxylates the guanylate binding protein 128up. May be involved in regulation of behavior and circadian rhythms. This chain is Bifunctional peptidase and (3S)-lysyl hydroxylase JMJD7, found in Drosophila melanogaster (Fruit fly).